Consider the following 269-residue polypeptide: G-protein coupled receptor homolog C3 (269 aa).

Residues Cys28 and Cys107 are joined by a disulfide bond. 5 helical membrane passes run 30-50 (IMSV…TLMS), 71-91 (IGIL…SPVS), 123-143 (LMQI…FVYC), 165-185 (IVLM…IVLM), and 200-220 (HLCL…ISLA).

The protein belongs to the G-protein coupled receptor 1 family.

It localises to the host cell membrane. The chain is G-protein coupled receptor homolog C3 from Sus scrofa (Pig).